The sequence spans 304 residues: Acetyl-coenzyme A carboxylase carboxyl transferase subunit beta (304 aa).

Positions 52 to 304 (EVTKCPSCGV…TIFKVLNDII (253 aa)) constitute a CoA carboxyltransferase N-terminal domain. 4 residues coordinate Zn(2+): Cys56, Cys59, Cys75, and Cys78. The C4-type zinc finger occupies 56–78 (CPSCGVLSHKSEIRANMKMCSNC).

This sequence belongs to the AccD/PCCB family. Acetyl-CoA carboxylase is a heterohexamer composed of biotin carboxyl carrier protein (AccB), biotin carboxylase (AccC) and two subunits each of ACCase subunit alpha (AccA) and ACCase subunit beta (AccD). It depends on Zn(2+) as a cofactor.

It localises to the cytoplasm. The catalysed reaction is N(6)-carboxybiotinyl-L-lysyl-[protein] + acetyl-CoA = N(6)-biotinyl-L-lysyl-[protein] + malonyl-CoA. It participates in lipid metabolism; malonyl-CoA biosynthesis; malonyl-CoA from acetyl-CoA: step 1/1. Its function is as follows. Component of the acetyl coenzyme A carboxylase (ACC) complex. Biotin carboxylase (BC) catalyzes the carboxylation of biotin on its carrier protein (BCCP) and then the CO(2) group is transferred by the transcarboxylase to acetyl-CoA to form malonyl-CoA. The protein is Acetyl-coenzyme A carboxylase carboxyl transferase subunit beta of Fusobacterium nucleatum subsp. nucleatum (strain ATCC 25586 / DSM 15643 / BCRC 10681 / CIP 101130 / JCM 8532 / KCTC 2640 / LMG 13131 / VPI 4355).